Consider the following 146-residue polypeptide: Hemoglobin subunit beta (146 aa).

Residues 2–146 (HWSAEEKQLI…VAHSLARVYH (145 aa)) form the Globin domain. Heme b-binding residues include His63 and His92.

The protein belongs to the globin family. As to quaternary structure, heterotetramer of two alpha chains and two beta chains. As to expression, red blood cells.

In terms of biological role, involved in oxygen transport from the lung to the various peripheral tissues. The sequence is that of Hemoglobin subunit beta (HBB) from Microcephalophis gracilis (Graceful small-headed sea snake).